We begin with the raw amino-acid sequence, 325 residues long: MDSQSSILEENLEKILRGEGLEFDSVAEQVDPVTLRKNVCYIVGAVIFNSKEEVLMVQEAKRECYGRWYLPAGRMEECESILEALQREVREEAGIDCQPITLLLVQEQGPRWVRFIFLAEETGGSLKTTAEADDESLQAHWWDRKSPLPLRAHDILSLIDAGLKYRRNPWFPVTQPVDFPCHVVCQRLFLTFISSRADADDRLWLLMSNNNTSHHPRLPIVVSFRTYISKAVSKLIEDCMPSSYISVHIRGILGVQHNGRIPGKTDGICFNTLVLLENTEEGAEIGSPPSLETDCYRWQEVTNQGLKAKIIERIKDGSVLPFQSL.

The Nudix hydrolase domain occupies 38-163; it reads NVCYIVGAVI…DILSLIDAGL (126 aa). Leucine 55 contributes to the Mg(2+) binding site. Residues 73 to 94 carry the Nudix box motif; the sequence is GRMEECESILEALQREVREEAG.

The protein belongs to the Nudix hydrolase family. Mn(2+) serves as cofactor. The cofactor is Mg(2+).

The enzyme catalyses 8-oxo-dGDP + H2O = 8-oxo-dGMP + phosphate + H(+). It carries out the reaction 8-oxo-dADP + H2O = 8-oxo-dAMP + phosphate + H(+). The catalysed reaction is 2-oxo-dADP + H2O = 2-oxo-dAMP + phosphate + H(+). It catalyses the reaction 8-oxo-GDP + H2O = 8-oxo-GMP + phosphate + H(+). Functionally, mediates the hydrolysis of oxidized nucleoside diphosphate derivatives. Hydrolyzes 8-oxo-7,8-dihydroguanine (8-oxo-Gua)-containing deoxyribo- and ribonucleoside diphosphates to the monophosphates. Hydrolyzes 8-oxo-dGDP and 8-oxo-GDP with the same efficiencies. Also hydrolyzes 8-OH-dADP and 2-OH-dADP. Exhibited no or minimal hydrolysis activity against 8-oxo-dGTP, 8-oxo-GTP, dGTP, GTP, dGDP and GDP. Probably removes oxidized guanine nucleotides from both the DNA and RNA precursor pools. The sequence is that of 8-oxo-dGDP phosphatase NUDT18 (nudt18) from Danio rerio (Zebrafish).